We begin with the raw amino-acid sequence, 369 residues long: Putative FAD-dependent monooxygenase YetM (369 aa).

The first 32 residues, 1–32 (MKHMLIAGGGIGGLSAAISLRKAGFSVTLCEA), serve as a signal peptide directing secretion. Residues Gly12, 31–32 (EA), Val126, and Asp285 each bind FAD.

It depends on FAD as a cofactor.

The sequence is that of Putative FAD-dependent monooxygenase YetM (yetM) from Bacillus subtilis (strain 168).